Here is a 265-residue protein sequence, read N- to C-terminus: Cytochrome c oxidase subunit 3 (265 aa).

The next 6 membrane-spanning stretches (helical) occupy residues 16–36 (PWPI…VMYM), 41–61 (GGAT…FVWW), 81–101 (GPRY…FALF), 162–182 (AVYA…FQGM), 200–220 (FFLA…FSIV), and 245–265 (WHFV…WGGI).

Belongs to the cytochrome c oxidase subunit 3 family. Component of the cytochrome c oxidase (complex IV, CIV), a multisubunit enzyme composed of a catalytic core of 3 subunits and several supernumerary subunits. The complex exists as a monomer or a dimer and forms supercomplexes (SCs) in the inner mitochondrial membrane with ubiquinol-cytochrome c oxidoreductase (cytochrome b-c1 complex, complex III, CIII).

The protein resides in the mitochondrion inner membrane. The enzyme catalyses 4 Fe(II)-[cytochrome c] + O2 + 8 H(+)(in) = 4 Fe(III)-[cytochrome c] + 2 H2O + 4 H(+)(out). In terms of biological role, component of the cytochrome c oxidase, the last enzyme in the mitochondrial electron transport chain which drives oxidative phosphorylation. The respiratory chain contains 3 multisubunit complexes succinate dehydrogenase (complex II, CII), ubiquinol-cytochrome c oxidoreductase (cytochrome b-c1 complex, complex III, CIII) and cytochrome c oxidase (complex IV, CIV), that cooperate to transfer electrons derived from NADH and succinate to molecular oxygen, creating an electrochemical gradient over the inner membrane that drives transmembrane transport and the ATP synthase. Cytochrome c oxidase is the component of the respiratory chain that catalyzes the reduction of oxygen to water. Electrons originating from reduced cytochrome c in the intermembrane space (IMS) are transferred via the dinuclear copper A center (CU(A)) of subunit 2 and heme A of subunit 1 to the active site in subunit 1, a binuclear center (BNC) formed by heme A3 and copper B (CU(B)). The BNC reduces molecular oxygen to 2 water molecules using 4 electrons from cytochrome c in the IMS and 4 protons from the mitochondrial matrix. The chain is Cytochrome c oxidase subunit 3 (COX3) from Helianthus annuus (Common sunflower).